A 177-amino-acid polypeptide reads, in one-letter code: Large ribosomal subunit protein uL10 (177 aa).

This sequence belongs to the universal ribosomal protein uL10 family. As to quaternary structure, part of the ribosomal stalk of the 50S ribosomal subunit. The N-terminus interacts with L11 and the large rRNA to form the base of the stalk. The C-terminus forms an elongated spine to which L12 dimers bind in a sequential fashion forming a multimeric L10(L12)X complex.

Its function is as follows. Forms part of the ribosomal stalk, playing a central role in the interaction of the ribosome with GTP-bound translation factors. The chain is Large ribosomal subunit protein uL10 from Xanthomonas axonopodis pv. citri (strain 306).